Reading from the N-terminus, the 563-residue chain is Cytochrome b (563 aa).

Helical transmembrane passes span serine 36–tyrosine 61, serine 81–arginine 104, tryptophan 119–serine 141, arginine 193–glycine 220, leucine 255–asparagine 276, isoleucine 326–leucine 345, phenylalanine 358–leucine 379, threonine 387–proline 409, isoleucine 436–isoleucine 454, threonine 458–leucine 476, isoleucine 505–leucine 527, and methionine 539–tyrosine 557. 2 residues coordinate heme: histidine 87 and histidine 101. Histidine 198 and histidine 212 together coordinate heme.

This sequence belongs to the cytochrome b family. As to quaternary structure, it is a component of at least 2 distinct terminal oxidases, the quinol oxidase (SoxABC) and the alternate quinol oxidase with the core components SoxM and a Rieske Fe-S protein.

The protein localises to the cell membrane. Binds 2 heme groups (b586 and b606) which are not covalently bound to the protein. This Sulfolobus acidocaldarius (strain ATCC 33909 / DSM 639 / JCM 8929 / NBRC 15157 / NCIMB 11770) protein is Cytochrome b (soxC).